A 309-amino-acid chain; its full sequence is Pantoate--beta-alanine ligase (309 aa).

This sequence belongs to the pantothenate synthetase family.

The protein resides in the cytoplasm. Its subcellular location is the nucleus. The catalysed reaction is (R)-pantoate + beta-alanine + ATP = (R)-pantothenate + AMP + diphosphate + H(+). Its pathway is cofactor biosynthesis; (R)-pantothenate biosynthesis; (R)-pantothenate from (R)-pantoate and beta-alanine: step 1/1. In terms of biological role, required for pantothenic acid biosynthesis. The protein is Pantoate--beta-alanine ligase (PAN6) of Saccharomyces cerevisiae (strain ATCC 204508 / S288c) (Baker's yeast).